Here is a 393-residue protein sequence, read N- to C-terminus: Riboflavin biosynthesis protein RibBA (393 aa).

Residues 1 to 200 are DHBP synthase; sequence MQLDSIDTAL…IEDLEKYRKS (200 aa). D-ribulose 5-phosphate-binding positions include 27 to 28, Asp32, 139 to 143, and Glu163; these read RE and RRGHT. Residue Glu28 coordinates Mg(2+). His142 lines the Mg(2+) pocket. A GTP cyclohydrolase II region spans residues 201-393; it reads SISKLDAKAK…TKKEKMGHLI (193 aa). 249 to 253 provides a ligand contact to GTP; the sequence is RIHSA. Positions 254, 265, and 267 each coordinate Zn(2+). Residues Gln270, 291–293, and Thr313 contribute to the GTP site; that span reads EGR. Asp325 functions as the Proton acceptor; for GTP cyclohydrolase activity in the catalytic mechanism. The active-site Nucleophile; for GTP cyclohydrolase activity is the Arg327. Positions 348 and 353 each coordinate GTP.

The protein in the N-terminal section; belongs to the DHBP synthase family. This sequence in the C-terminal section; belongs to the GTP cyclohydrolase II family. It depends on Mg(2+) as a cofactor. Mn(2+) is required as a cofactor. The cofactor is Zn(2+).

The enzyme catalyses D-ribulose 5-phosphate = (2S)-2-hydroxy-3-oxobutyl phosphate + formate + H(+). It carries out the reaction GTP + 4 H2O = 2,5-diamino-6-hydroxy-4-(5-phosphoribosylamino)-pyrimidine + formate + 2 phosphate + 3 H(+). Its pathway is cofactor biosynthesis; riboflavin biosynthesis; 2-hydroxy-3-oxobutyl phosphate from D-ribulose 5-phosphate: step 1/1. The protein operates within cofactor biosynthesis; riboflavin biosynthesis; 5-amino-6-(D-ribitylamino)uracil from GTP: step 1/4. Functionally, catalyzes the conversion of D-ribulose 5-phosphate to formate and 3,4-dihydroxy-2-butanone 4-phosphate. Its function is as follows. Catalyzes the conversion of GTP to 2,5-diamino-6-ribosylamino-4(3H)-pyrimidinone 5'-phosphate (DARP), formate and pyrophosphate. This Staphylococcus saprophyticus subsp. saprophyticus (strain ATCC 15305 / DSM 20229 / NCIMB 8711 / NCTC 7292 / S-41) protein is Riboflavin biosynthesis protein RibBA.